The sequence spans 250 residues: NH(3)-dependent NAD(+) synthetase (250 aa).

30–37 (GVSGGIDS) is an ATP binding site. Asp36 contributes to the Mg(2+) binding site. A deamido-NAD(+)-binding site is contributed by Arg117. An ATP-binding site is contributed by Thr137. Mg(2+) is bound at residue Glu142. Positions 150 and 157 each coordinate deamido-NAD(+). The ATP site is built by Lys166 and Ser188. A deamido-NAD(+)-binding site is contributed by 234–235 (HK).

The protein belongs to the NAD synthetase family. Homodimer.

The enzyme catalyses deamido-NAD(+) + NH4(+) + ATP = AMP + diphosphate + NAD(+) + H(+). Its pathway is cofactor biosynthesis; NAD(+) biosynthesis; NAD(+) from deamido-NAD(+) (ammonia route): step 1/1. Catalyzes the ATP-dependent amidation of deamido-NAD to form NAD. Uses ammonia as a nitrogen source. The chain is NH(3)-dependent NAD(+) synthetase from Mannheimia succiniciproducens (strain KCTC 0769BP / MBEL55E).